Here is a 241-residue protein sequence, read N- to C-terminus: ATP synthase subunit a (241 aa).

The next 5 helical transmembrane spans lie at 30 to 50 (GQVF…ISLG), 91 to 111 (FIGT…LIPW), 128 to 148 (INTT…AGLS), 193 to 213 (LVVG…VMFL), and 214 to 234 (GLFT…YYIG).

It belongs to the ATPase A chain family. F-type ATPases have 2 components, CF(1) - the catalytic core - and CF(0) - the membrane proton channel. CF(1) has five subunits: alpha(3), beta(3), gamma(1), delta(1), epsilon(1). CF(0) has four main subunits: a, b, b' and c.

The protein localises to the cellular thylakoid membrane. Key component of the proton channel; it plays a direct role in the translocation of protons across the membrane. In Prochlorococcus marinus (strain MIT 9301), this protein is ATP synthase subunit a.